Here is a 947-residue protein sequence, read N- to C-terminus: Ionotropic receptor 25a (947 aa).

Residues 1 to 30 (MILMNPKTSKILWLLGFLSLLSSFSLEIAA) form the signal peptide. The Extracellular portion of the chain corresponds to 31-562 (QTTQNINVLF…SLFKFLTVLE (532 aa)). N-linked (GlcNAc...) asparagine glycosylation is found at Asn78, Asn177, Asn277, and Asn434. Residues 563–583 (TNVWLCILAAYFFTSFLMWIF) traverse the membrane as a helical segment. Over 584-641 (DRWSPYSYQNNREKYKDDEEKREFNLKECLWFCMTSLTPQGGGEAPKNLSGRLVAATW) the chain is Cytoplasmic. The helical transmembrane segment at 642–662 (WLFGFIIIASYTANLAAFLTV) threads the bilayer. Residues 663–858 (SRLDTPVESL…DQSDGISIQN (196 aa)) are Extracellular-facing. 3 N-linked (GlcNAc...) asparagine glycosylation sites follow: Asn687, Asn715, and Asn762. Residues 859–879 (IGGVFIVIFVGIGMACITLVF) form a helical membrane-spanning segment. At 880-947 (EYWWYRYRKN…QYPATFKPRF (68 aa)) the chain is on the cytoplasmic side.

This sequence belongs to the glutamate-gated ion channel (TC 1.A.10.1) family. As to quaternary structure, interacts with nocte. In the antenna, detected in neurons of the arista and also detected in sacculus neurons which innervate the first and second chambers (at protein level). Throughout the main body of the antenna, expressed in neurons which innervate the coeloconic class of olfactory sensilla (at protein level). Expressed in multiple cells of the dorsal organ including the dorsal organ cool cells (at protein level). Detected in femur and retina. Expressed in a subset of femur chordonotal neurons and antennal Johnston's Organ neurons.

It is found in the cell membrane. It localises to the cell projection. Its subcellular location is the axon. The protein resides in the dendrite. The protein localises to the perikaryon. It is found in the cilium. Integral part of various neural sensory systems in the antenna that provide the neural basis for the response to environmental changes in temperature (thermosensation), humidity (hygrosensation) and odor detection. Required for odor-evoked electrophysiological responses in multiple neuron classes in the antenna and is likely to function as part of an olfactory receptor complex with Ir76a and Ir76b. Together with Ir21a and Ir93a, mediates the response of the larval dorsal organ cool cells, a trio of cool-responsive neurons, to cooling and is required for cool avoidance behavior. Required in chordonotal organ neurons for behavioral synchronization to low-amplitude temperature cycles and mediates circadian clock resetting by temperature. Together with Ir40a and Ir93a, mediates the response of the hydrosensory sacculus neurons to changes in relative humidity, and is required for dry detection and humidiy preference behavior. The polypeptide is Ionotropic receptor 25a (Drosophila melanogaster (Fruit fly)).